A 55-amino-acid chain; its full sequence is Large ribosomal subunit protein bL33 (55 aa).

The protein belongs to the bacterial ribosomal protein bL33 family.

The chain is Large ribosomal subunit protein bL33 from Caulobacter sp. (strain K31).